Reading from the N-terminus, the 169-residue chain is Transcription antitermination protein NusB (169 aa).

The disordered stretch occupies residues 1-23 (MADSKKPAIKKPVPKGDRKANRR).

Belongs to the NusB family.

In terms of biological role, involved in transcription antitermination. Required for transcription of ribosomal RNA (rRNA) genes. Binds specifically to the boxA antiterminator sequence of the ribosomal RNA (rrn) operons. The polypeptide is Transcription antitermination protein NusB (Rhodopseudomonas palustris (strain HaA2)).